Here is a 397-residue protein sequence, read N- to C-terminus: Cysteine protease ATG4A (397 aa).

Cys79 functions as the Nucleophile in the catalytic mechanism. Active-site residues include Asp279 and His281. The short motif at 392 to 395 (FEIL) is the LIR element.

Belongs to the peptidase C54 family.

The protein localises to the cytoplasm. It carries out the reaction [protein]-C-terminal L-amino acid-glycyl-phosphatidylethanolamide + H2O = [protein]-C-terminal L-amino acid-glycine + a 1,2-diacyl-sn-glycero-3-phosphoethanolamine. Its function is as follows. Cysteine protease that plays a key role in autophagy by mediating both proteolytic activation and delipidation of ATG8 family proteins. The protease activity is required for proteolytic activation of ATG8 family proteins: cleaves the C-terminal amino acid of ATG8 proteins to reveal a C-terminal glycine. Exposure of the glycine at the C-terminus is essential for ATG8 proteins conjugation to phosphatidylethanolamine (PE) and insertion to membranes, which is necessary for autophagy. Protease activity is also required to counteract formation of high-molecular weight conjugates of ATG8 proteins (ATG8ylation): acts as a deubiquitinating-like enzyme that removes ATG8 conjugated to other proteins, such as ATG3. In addition to the protease activity, also mediates delipidation of ATG8 family proteins. Catalyzes delipidation of PE-conjugated forms of ATG8 proteins during macroautophagy. The polypeptide is Cysteine protease ATG4A (Xenopus laevis (African clawed frog)).